The following is a 211-amino-acid chain: NADH-quinone oxidoreductase subunit I (211 aa).

2 4Fe-4S ferredoxin-type domains span residues 90–119 and 129–158; these read RLWE…IDTK and TEYS…HGGE. Residues cysteine 99, cysteine 102, cysteine 105, cysteine 109, cysteine 138, cysteine 141, cysteine 144, and cysteine 148 each contribute to the [4Fe-4S] cluster site.

This sequence belongs to the complex I 23 kDa subunit family. As to quaternary structure, NDH-1 is composed of 14 different subunits. Subunits NuoA, H, J, K, L, M, N constitute the membrane sector of the complex. Requires [4Fe-4S] cluster as cofactor.

The protein localises to the cell inner membrane. It carries out the reaction a quinone + NADH + 5 H(+)(in) = a quinol + NAD(+) + 4 H(+)(out). Its function is as follows. NDH-1 shuttles electrons from NADH, via FMN and iron-sulfur (Fe-S) centers, to quinones in the respiratory chain. The immediate electron acceptor for the enzyme in this species is believed to be ubiquinone. Couples the redox reaction to proton translocation (for every two electrons transferred, four hydrogen ions are translocated across the cytoplasmic membrane), and thus conserves the redox energy in a proton gradient. This chain is NADH-quinone oxidoreductase subunit I, found in Sulfurimonas denitrificans (strain ATCC 33889 / DSM 1251) (Thiomicrospira denitrificans (strain ATCC 33889 / DSM 1251)).